Consider the following 292-residue polypeptide: AhcY transcriptional activator HvrB (292 aa).

The HTH lysR-type domain occupies proline 10–threonine 67. Residues phenylalanine 27–arginine 46 constitute a DNA-binding region (H-T-H motif).

Belongs to the LysR transcriptional regulatory family.

Functions as a low-light activator of ahcY expression (gene for S-adenosyl-L-homocysteine hydrolase) and as a high-light activator of an uncharacterized 21.6 kDa protein in the ahcY-hvrB intergenic region (orf5). It is also a negative regulator of its own expression. In Rhodobacter capsulatus (strain ATCC BAA-309 / NBRC 16581 / SB1003), this protein is AhcY transcriptional activator HvrB (hvrB).